We begin with the raw amino-acid sequence, 503 residues long: Glycerol kinase (503 aa).

Threonine 14 contributes to the ADP binding site. Residues threonine 14, threonine 15, and serine 16 each contribute to the ATP site. Residue threonine 14 coordinates sn-glycerol 3-phosphate. Arginine 18 contacts ADP. Positions 84, 85, 136, and 246 each coordinate sn-glycerol 3-phosphate. Arginine 84, glutamate 85, tyrosine 136, aspartate 246, and glutamine 247 together coordinate glycerol. Residues threonine 268 and glycine 311 each contribute to the ADP site. ATP-binding residues include threonine 268, glycine 311, glutamine 315, and glycine 412. Positions 412 and 416 each coordinate ADP.

Belongs to the FGGY kinase family.

The enzyme catalyses glycerol + ATP = sn-glycerol 3-phosphate + ADP + H(+). Its pathway is polyol metabolism; glycerol degradation via glycerol kinase pathway; sn-glycerol 3-phosphate from glycerol: step 1/1. Inhibited by fructose 1,6-bisphosphate (FBP). Key enzyme in the regulation of glycerol uptake and metabolism. Catalyzes the phosphorylation of glycerol to yield sn-glycerol 3-phosphate. The sequence is that of Glycerol kinase from Haemophilus influenzae (strain PittGG).